A 248-amino-acid chain; its full sequence is MASRWQNMGTSVRRRSLQHQEQLEDSKELQPVVSHQETSVGALGSLCRQFQRRLPLRAVNLNLRAGPSWKRLETPEPGQQGLQAAARSAKSALGAVSQRIQESCQSGTKWLVETQVKARRRKRGAQKGSGSPTHSLSQKSTRLSGAAPAHSAADPWEKEHHRLSVRMGSHAHPLRRSRREAAFRSPYSSTEPLCSPSESDSDLEPVGAGIQHLQKLSQELDEAIMAEERKQALSDRQGFILKDVYASP.

The span at 1–10 (MASRWQNMGT) shows a compositional bias: polar residues. Positions 1 to 32 (MASRWQNMGTSVRRRSLQHQEQLEDSKELQPV) are disordered. Ser-11 and Ser-16 each carry phosphoserine. 2 consecutive short sequence motifs (D-box) follow at residues 14 to 17 (RRSL) and 53 to 56 (RLPL). Positions 117–205 (KARRRKRGAQ…PSESDSDLEP (89 aa)) are disordered. Ser-129 bears the Phosphoserine mark. Ser-131 carries the phosphoserine; by UHMK1; in vitro modification. 2 stretches are compositionally biased toward polar residues: residues 132-143 (PTHSLSQKSTRL) and 186-198 (PYSS…SPSE). 2 positions are modified to phosphoserine: Ser-199 and Ser-201.

Isoform 1 and isoform 2 interact with PICALM; this interaction may target PICALM to the nucleus. During mitosis, associates with HDAC2 and MTA2 subunits of the chromatin-remodeling NuRD complex; this association is strongest at prometaphase and decreases as the cell progresses through metaphase and anaphase. Post-translationally, ubiquitinated by the anaphase-promoting complex/cyclosome (APC/C) complex in the presence of FZR1, leading to its degradation by the proteasome during mitotic exit. However, degradation is not essential for normal mitotic progression within a single cell cycle. In terms of tissue distribution, expressed in thymus (at protein level). Detected in spleen, colon, ovary and small intestines.

The protein resides in the nucleus. It is found in the nucleolus. In terms of biological role, during mitosis, may play a role in the control of metaphase-to-anaphase transition. In Homo sapiens (Human), this protein is Protein PIMREG.